Here is a 383-residue protein sequence, read N- to C-terminus: Probable aspartate/prephenate aminotransferase (383 aa).

G39, W125, and N175 together coordinate L-aspartate. K234 carries the post-translational modification N6-(pyridoxal phosphate)lysine. An L-aspartate-binding site is contributed by R361.

This sequence belongs to the class-I pyridoxal-phosphate-dependent aminotransferase family. Homodimer. Pyridoxal 5'-phosphate is required as a cofactor.

It localises to the cytoplasm. It carries out the reaction L-aspartate + 2-oxoglutarate = oxaloacetate + L-glutamate. It catalyses the reaction L-arogenate + oxaloacetate = prephenate + L-aspartate. Catalyzes the reversible conversion of aspartate and 2-oxoglutarate to glutamate and oxaloacetate. Can also transaminate prephenate in the presence of aspartate. This chain is Probable aspartate/prephenate aminotransferase (aspC), found in Thermus aquaticus.